The following is a 164-amino-acid chain: 16S rRNA aminocarboxypropyltransferase (164 aa).

Thr-18, Ile-66, Leu-87, and Ser-106 together coordinate S-adenosyl-L-methionine.

It belongs to the TDD superfamily. TSR3 family.

It localises to the cytoplasm. It carries out the reaction an N(1)-methylpseudouridine in rRNA + S-adenosyl-L-methionine = N(1)-methyl-N(3)-[(3S)-3-amino-3-carboxypropyl]pseudouridine in rRNA + S-methyl-5'-thioadenosine + H(+). Functionally, aminocarboxypropyltransferase that catalyzes the aminocarboxypropyl transfer on pseudouridine corresponding to position 914 in M.jannaschii 16S rRNA. It constitutes the last step in biosynthesis of the hypermodified N1-methyl-N3-(3-amino-3-carboxypropyl) pseudouridine (m1acp3-Psi). This Thermoplasma volcanium (strain ATCC 51530 / DSM 4299 / JCM 9571 / NBRC 15438 / GSS1) protein is 16S rRNA aminocarboxypropyltransferase.